The following is a 63-amino-acid chain: Prokaryotic ubiquitin-like protein UBact (63 aa).

The interval 1 to 63 is disordered; it reads MSGRSTFGRF…SRRYRQRTGE (63 aa). Over residues 17 to 50 the composition is skewed to basic and acidic residues; it reads PWERKPGDDEGGPKRPKVERPDTNDLLKRMRRVD. Residue E63 forms an Isoglutamyl lysine isopeptide (Glu-Lys) (interchain with K-? in acceptor proteins) linkage.

The protein belongs to the ubiquitin-like protein UBact family.

Its function is as follows. May function as a protein modifier covalently attached to lysine residues of substrate proteins. This may serve to target the modified proteins for degradation by proteasomes. This Handelsmanbacteria sp. (strain RIFCSPLOWO2_12_FULL_64_10) protein is Prokaryotic ubiquitin-like protein UBact.